A 189-amino-acid chain; its full sequence is Lumazine protein (189 aa).

2 Lumazine-binding repeats span residues 1-96 and 97-189; these read MFKG…LGKG and ALTG…SNEW.

Requires 6,7-dimethyl-8-(1-D-ribityl)lumazine as cofactor.

In terms of biological role, antenna protein that modulates the color of the bioluminescence emission of the luciferase. In the presence of LumP, luciferase emission is shifted to higher energy values (shorter wavelength). The polypeptide is Lumazine protein (luxL) (Photobacterium phosphoreum).